Consider the following 2323-residue polypeptide: C2 domain-containing protein 3 (2323 aa).

Disordered stretches follow at residues 1-27 (MKQRKGQGPGGGRGRKKRGLSDISPST), 193-215 (RELRENTESSNTQSMIPSRSCRG), 402-426 (WNGLGSPPDSPTPGSDEYCSSDLND), 444-509 (SDVG…HTPA), 537-556 (PDSPHMTPSRKNFAGKPPKP), and 698-745 (KLSS…TKKT). Polar residues predominate over residues 200–209 (ESSNTQSMIP). Ser-453 carries the phosphoserine modification. Basic and acidic residues predominate over residues 474–483 (KVVESKEQKQ). The 160-residue stretch at 504-663 (PGHTPAMSLS…IQSELLSFSS (160 aa)) folds into the C2 1 domain. The span at 698-735 (KLSSSTQPAPVSAATSSDTILPETGQDTACTRNPQSSN) shows a compositional bias: polar residues. Ser-713 carries the post-translational modification Phosphoserine. C2 domains lie at 771 to 903 (SCNL…SRLL), 969 to 1131 (QPPV…YRED), 1155 to 1323 (SSGF…TGWY), and 1383 to 1517 (KEEE…TLTI). Residues 1550–1574 (EPARELDSMDCSSHSESEQHPRKSD) show a composition bias toward basic and acidic residues. 2 disordered regions span residues 1550-1599 (EPAR…NSAA) and 1798-1824 (LAHTSPKEDGLSSPARNGAIRSQAARH). The span at 1584 to 1599 (LQTSPTSTQVHGNSAA) shows a compositional bias: polar residues. A C2 6 domain is found at 1598–1726 (AAAQVCPAQE…SGFQFICGWY (129 aa)). Position 1871 is a phosphoserine (Ser-1871). Disordered stretches follow at residues 1891–1918 (FSSQSSPAVSQSQESQRDPVAAGTGRQD), 1952–2013 (ALTS…GGML), 2074–2163 (SEVL…SVGW), 2182–2231 (SEAF…EVST), and 2261–2323 (SHSP…TEET). Residues 1892-1904 (SSQSSPAVSQSQE) show a composition bias toward low complexity. Composition is skewed to polar residues over residues 1952 to 1965 (ALTSQQARSRSRAV) and 2074 to 2083 (SEVLSPQPTE). Positions 2110–2125 (AVSPQPAQGSPSQSGV) are enriched in low complexity. The span at 2147–2158 (PSLTFSEAQEGS) shows a compositional bias: polar residues. The segment covering 2182–2197 (SEAFSSEFSDSSESFE) has biased composition (low complexity). Positions 2207-2216 (SKREDYKDSP) are enriched in basic and acidic residues. The segment covering 2222 to 2231 (QVPTGSEVST) has biased composition (polar residues).

As to quaternary structure, interacts with OFD1; OFD1 may act as a negative regulator of C2CD3. Associates with the BBSome complex. Interacts with IFT88, BBS4 and PCM1.

It localises to the cytoplasm. Its subcellular location is the cytoskeleton. The protein localises to the cilium basal body. The protein resides in the microtubule organizing center. It is found in the centrosome. It localises to the centriole. Component of the centrioles that acts as a positive regulator of centriole elongation. Promotes assembly of centriolar distal appendage, a structure at the distal end of the mother centriole that acts as an anchor of the cilium, and is required for recruitment of centriolar distal appendages proteins CEP83, SCLT1, CEP89, FBF1 and CEP164. Not required for centriolar satellite integrity or RAB8 activation. Required for primary cilium formation. Required for sonic hedgehog/SHH signaling and for proteolytic processing of GLI3. The polypeptide is C2 domain-containing protein 3 (C2cd3) (Mus musculus (Mouse)).